We begin with the raw amino-acid sequence, 276 residues long: Putative translation initiation factor eIF-2B subunit 2-like (276 aa).

The protein belongs to the eIF-2B alpha/beta/delta subunits family. As to quaternary structure, complex of two different subunits.

Functionally, catalyzes the exchange of initiation factor 2-bound GDP for GTP. This Pyrococcus abyssi (strain GE5 / Orsay) protein is Putative translation initiation factor eIF-2B subunit 2-like.